The sequence spans 345 residues: Anthranilate phosphoribosyltransferase (345 aa).

Residues Gly81, 84–85 (GD), Ser89, 91–94 (NVST), 109–117 (KHGNRAATS), and Ala121 contribute to the 5-phospho-alpha-D-ribose 1-diphosphate site. Anthranilate is bound at residue Gly81. Mg(2+) is bound at residue Ser93. Asn112 is an anthranilate binding site. Arg167 is an anthranilate binding site. Residues Asp226 and Glu227 each coordinate Mg(2+).

It belongs to the anthranilate phosphoribosyltransferase family. In terms of assembly, homodimer. Mg(2+) is required as a cofactor.

The enzyme catalyses N-(5-phospho-beta-D-ribosyl)anthranilate + diphosphate = 5-phospho-alpha-D-ribose 1-diphosphate + anthranilate. It participates in amino-acid biosynthesis; L-tryptophan biosynthesis; L-tryptophan from chorismate: step 2/5. Functionally, catalyzes the transfer of the phosphoribosyl group of 5-phosphorylribose-1-pyrophosphate (PRPP) to anthranilate to yield N-(5'-phosphoribosyl)-anthranilate (PRA). This chain is Anthranilate phosphoribosyltransferase, found in Methylobacterium radiotolerans (strain ATCC 27329 / DSM 1819 / JCM 2831 / NBRC 15690 / NCIMB 10815 / 0-1).